A 126-amino-acid polypeptide reads, in one-letter code: Aspartate 1-decarboxylase (126 aa).

Ser-25 functions as the Schiff-base intermediate with substrate; via pyruvic acid in the catalytic mechanism. The residue at position 25 (Ser-25) is a Pyruvic acid (Ser). Thr-57 is a substrate binding site. Tyr-58 acts as the Proton donor in catalysis. Residue 73–75 (GAA) participates in substrate binding.

The protein belongs to the PanD family. As to quaternary structure, heterooctamer of four alpha and four beta subunits. Pyruvate serves as cofactor. Post-translationally, is synthesized initially as an inactive proenzyme, which is activated by self-cleavage at a specific serine bond to produce a beta-subunit with a hydroxyl group at its C-terminus and an alpha-subunit with a pyruvoyl group at its N-terminus.

Its subcellular location is the cytoplasm. The enzyme catalyses L-aspartate + H(+) = beta-alanine + CO2. It functions in the pathway cofactor biosynthesis; (R)-pantothenate biosynthesis; beta-alanine from L-aspartate: step 1/1. Functionally, catalyzes the pyruvoyl-dependent decarboxylation of aspartate to produce beta-alanine. The chain is Aspartate 1-decarboxylase from Stutzerimonas stutzeri (strain A1501) (Pseudomonas stutzeri).